Reading from the N-terminus, the 279-residue chain is 1-(5-phosphoribosyl)-5-[(5-phosphoribosylamino)methylideneamino] imidazole-4-carboxamide isomerase (279 aa).

The protein belongs to the HisA/HisF family.

It is found in the cytoplasm. It carries out the reaction 1-(5-phospho-beta-D-ribosyl)-5-[(5-phospho-beta-D-ribosylamino)methylideneamino]imidazole-4-carboxamide = 5-[(5-phospho-1-deoxy-D-ribulos-1-ylimino)methylamino]-1-(5-phospho-beta-D-ribosyl)imidazole-4-carboxamide. It participates in amino-acid biosynthesis; L-histidine biosynthesis; L-histidine from 5-phospho-alpha-D-ribose 1-diphosphate: step 4/9. This is 1-(5-phosphoribosyl)-5-[(5-phosphoribosylamino)methylideneamino] imidazole-4-carboxamide isomerase (HIS6) from Candida albicans (Yeast).